The sequence spans 467 residues: ATP synthase subunit beta (467 aa).

G150 to T157 is a binding site for ATP.

Belongs to the ATPase alpha/beta chains family. F-type ATPases have 2 components, CF(1) - the catalytic core - and CF(0) - the membrane proton channel. CF(1) has five subunits: alpha(3), beta(3), gamma(1), delta(1), epsilon(1). CF(0) has three main subunits: a(1), b(2) and c(9-12). The alpha and beta chains form an alternating ring which encloses part of the gamma chain. CF(1) is attached to CF(0) by a central stalk formed by the gamma and epsilon chains, while a peripheral stalk is formed by the delta and b chains.

The protein localises to the cell inner membrane. It carries out the reaction ATP + H2O + 4 H(+)(in) = ADP + phosphate + 5 H(+)(out). Functionally, produces ATP from ADP in the presence of a proton gradient across the membrane. The catalytic sites are hosted primarily by the beta subunits. This Vibrio parahaemolyticus serotype O3:K6 (strain RIMD 2210633) protein is ATP synthase subunit beta.